A 105-amino-acid polypeptide reads, in one-letter code: Met repressor (105 aa).

Belongs to the MetJ family. In terms of assembly, homodimer.

It localises to the cytoplasm. This regulatory protein, when combined with SAM (S-adenosylmethionine) represses the expression of the methionine regulon and of enzymes involved in SAM synthesis. This chain is Met repressor, found in Pasteurella multocida (strain Pm70).